A 117-amino-acid chain; its full sequence is UPF0342 protein Bcer98_0695 (117 aa).

Belongs to the UPF0342 family.

The sequence is that of UPF0342 protein Bcer98_0695 from Bacillus cytotoxicus (strain DSM 22905 / CIP 110041 / 391-98 / NVH 391-98).